A 133-amino-acid polypeptide reads, in one-letter code: L-cystatin (133 aa).

Residues 1-19 (MEGYNILAVLIILVGVSMG) form the signal peptide. At Gln20 the chain carries Pyrrolidone carboxylic acid. Positions 67 to 71 (QVVSG) match the Secondary area of contact motif. 2 cysteine pairs are disulfide-bonded: Cys85/Cys98 and Cys109/Cys129.

Belongs to the cystatin family. As to expression, expressed in hemocytes and slightly in heart.

Its subcellular location is the cytoplasmic granule. Its function is as follows. Tight-binding inhibitor for papain. It has an important role in the protection of cells, antimicrobial activity against Gram-negative bacteria, defense against invading microbes, and response to external stimuli. This Tachypleus tridentatus (Japanese horseshoe crab) protein is L-cystatin.